A 279-amino-acid chain; its full sequence is tRNA uridine(34) hydroxylase (279 aa).

The 96-residue stretch at 126 to 221 (TKPGMHVIDT…YLQSVKGADS (96 aa)) folds into the Rhodanese domain. The Cysteine persulfide intermediate role is filled by Cys-181.

This sequence belongs to the TrhO family.

The enzyme catalyses uridine(34) in tRNA + AH2 + O2 = 5-hydroxyuridine(34) in tRNA + A + H2O. In terms of biological role, catalyzes oxygen-dependent 5-hydroxyuridine (ho5U) modification at position 34 in tRNAs. The polypeptide is tRNA uridine(34) hydroxylase (Anaplasma phagocytophilum (strain HZ)).